The chain runs to 194 residues: dTTP/UTP pyrophosphatase (194 aa).

The Proton acceptor role is filled by Asp76.

Belongs to the Maf family. YhdE subfamily. It depends on a divalent metal cation as a cofactor.

It localises to the cytoplasm. The enzyme catalyses dTTP + H2O = dTMP + diphosphate + H(+). The catalysed reaction is UTP + H2O = UMP + diphosphate + H(+). Its function is as follows. Nucleoside triphosphate pyrophosphatase that hydrolyzes dTTP and UTP. May have a dual role in cell division arrest and in preventing the incorporation of modified nucleotides into cellular nucleic acids. This is dTTP/UTP pyrophosphatase from Shewanella sp. (strain MR-7).